Consider the following 180-residue polypeptide: UPF0227 protein YcfP (180 aa).

Belongs to the UPF0227 family.

This is UPF0227 protein YcfP from Salmonella agona (strain SL483).